The sequence spans 210 residues: Thiamine-phosphate synthase (210 aa).

Residues 36–40 (QLRIK) and Asn68 each bind 4-amino-2-methyl-5-(diphosphooxymethyl)pyrimidine. Asp69 and Asp88 together coordinate Mg(2+). Ser107 serves as a coordination point for 4-amino-2-methyl-5-(diphosphooxymethyl)pyrimidine. 133-135 (TQT) is a 2-[(2R,5Z)-2-carboxy-4-methylthiazol-5(2H)-ylidene]ethyl phosphate binding site. A 4-amino-2-methyl-5-(diphosphooxymethyl)pyrimidine-binding site is contributed by Lys136. Residues Gly165 and 185-186 (VS) contribute to the 2-[(2R,5Z)-2-carboxy-4-methylthiazol-5(2H)-ylidene]ethyl phosphate site.

Belongs to the thiamine-phosphate synthase family. Requires Mg(2+) as cofactor.

It carries out the reaction 2-[(2R,5Z)-2-carboxy-4-methylthiazol-5(2H)-ylidene]ethyl phosphate + 4-amino-2-methyl-5-(diphosphooxymethyl)pyrimidine + 2 H(+) = thiamine phosphate + CO2 + diphosphate. The catalysed reaction is 2-(2-carboxy-4-methylthiazol-5-yl)ethyl phosphate + 4-amino-2-methyl-5-(diphosphooxymethyl)pyrimidine + 2 H(+) = thiamine phosphate + CO2 + diphosphate. The enzyme catalyses 4-methyl-5-(2-phosphooxyethyl)-thiazole + 4-amino-2-methyl-5-(diphosphooxymethyl)pyrimidine + H(+) = thiamine phosphate + diphosphate. The protein operates within cofactor biosynthesis; thiamine diphosphate biosynthesis; thiamine phosphate from 4-amino-2-methyl-5-diphosphomethylpyrimidine and 4-methyl-5-(2-phosphoethyl)-thiazole: step 1/1. In terms of biological role, condenses 4-methyl-5-(beta-hydroxyethyl)thiazole monophosphate (THZ-P) and 2-methyl-4-amino-5-hydroxymethyl pyrimidine pyrophosphate (HMP-PP) to form thiamine monophosphate (TMP). This Cronobacter sakazakii (strain ATCC BAA-894) (Enterobacter sakazakii) protein is Thiamine-phosphate synthase.